Reading from the N-terminus, the 775-residue chain is Acylamino-acid-releasing enzyme 1 (775 aa).

Catalysis depends on charge relay system residues serine 627, aspartate 718, and histidine 750.

It belongs to the peptidase S9C family. As to quaternary structure, homotetramer.

The protein resides in the cytoplasm. The catalysed reaction is Cleavage of an N-acetyl or N-formyl amino acid from the N-terminus of a polypeptide.. In terms of biological role, catalyzes the hydrolysis of the N-terminal peptide bond of an N-acetylated peptide to generate an N-acetylated amino acid and a peptide with a free N-terminus. The chain is Acylamino-acid-releasing enzyme 1 from Oryza sativa subsp. japonica (Rice).